The chain runs to 143 residues: Large ribosomal subunit protein uL11 (143 aa).

Belongs to the universal ribosomal protein uL11 family. As to quaternary structure, part of the ribosomal stalk of the 50S ribosomal subunit. Interacts with L10 and the large rRNA to form the base of the stalk. L10 forms an elongated spine to which L12 dimers bind in a sequential fashion forming a multimeric L10(L12)X complex. One or more lysine residues are methylated.

Its function is as follows. Forms part of the ribosomal stalk which helps the ribosome interact with GTP-bound translation factors. The chain is Large ribosomal subunit protein uL11 from Kineococcus radiotolerans (strain ATCC BAA-149 / DSM 14245 / SRS30216).